Reading from the N-terminus, the 319-residue chain is Guanidinobutyrase (319 aa).

6 residues coordinate Mn(2+): His-129, Asp-152, His-154, Asp-156, Asp-243, and Asp-245.

This sequence belongs to the arginase family. Agmatinase subfamily. In terms of assembly, homohexamer. The cofactor is Mn(2+).

The enzyme catalyses 4-guanidinobutanoate + H2O = urea + 4-aminobutanoate. Catalyzes specifically the hydrolysis of 4-guanidinobutanoate to 4-aminobutanoate and urea. Has no activity against arginine, agmatine, 3-guanidinopropionate and guanidinoacetate. The sequence is that of Guanidinobutyrase (gbuA) from Pseudomonas aeruginosa (strain ATCC 15692 / DSM 22644 / CIP 104116 / JCM 14847 / LMG 12228 / 1C / PRS 101 / PAO1).